The chain runs to 507 residues: Maturase K (507 aa).

The protein belongs to the intron maturase 2 family. MatK subfamily.

It is found in the plastid. The protein resides in the chloroplast. Usually encoded in the trnK tRNA gene intron. Probably assists in splicing its own and other chloroplast group II introns. This is Maturase K from Cryptomeria japonica (Japanese cedar).